A 419-amino-acid polypeptide reads, in one-letter code: Serine hydroxymethyltransferase (419 aa).

Residues leucine 121 and 125–127 (GHL) each bind (6S)-5,6,7,8-tetrahydrofolate. Lysine 230 carries the post-translational modification N6-(pyridoxal phosphate)lysine. Residue 355–357 (SPF) participates in (6S)-5,6,7,8-tetrahydrofolate binding.

Belongs to the SHMT family. In terms of assembly, homodimer. It depends on pyridoxal 5'-phosphate as a cofactor.

It is found in the cytoplasm. It catalyses the reaction (6R)-5,10-methylene-5,6,7,8-tetrahydrofolate + glycine + H2O = (6S)-5,6,7,8-tetrahydrofolate + L-serine. It functions in the pathway one-carbon metabolism; tetrahydrofolate interconversion. It participates in amino-acid biosynthesis; glycine biosynthesis; glycine from L-serine: step 1/1. In terms of biological role, catalyzes the reversible interconversion of serine and glycine with tetrahydrofolate (THF) serving as the one-carbon carrier. This reaction serves as the major source of one-carbon groups required for the biosynthesis of purines, thymidylate, methionine, and other important biomolecules. Also exhibits THF-independent aldolase activity toward beta-hydroxyamino acids, producing glycine and aldehydes, via a retro-aldol mechanism. This chain is Serine hydroxymethyltransferase, found in Streptococcus equi subsp. zooepidemicus (strain H70).